Here is a 170-residue protein sequence, read N- to C-terminus: Peptide deformylase (170 aa).

Residues cysteine 91 and histidine 133 each contribute to the Fe cation site. Glutamate 134 is a catalytic residue. Histidine 137 contributes to the Fe cation binding site.

The protein belongs to the polypeptide deformylase family. It depends on Fe(2+) as a cofactor.

The enzyme catalyses N-terminal N-formyl-L-methionyl-[peptide] + H2O = N-terminal L-methionyl-[peptide] + formate. Removes the formyl group from the N-terminal Met of newly synthesized proteins. Requires at least a dipeptide for an efficient rate of reaction. N-terminal L-methionine is a prerequisite for activity but the enzyme has broad specificity at other positions. This chain is Peptide deformylase, found in Pectobacterium carotovorum subsp. carotovorum (strain PC1).